A 188-amino-acid chain; its full sequence is Elongation factor P-like protein (188 aa).

The protein belongs to the elongation factor P family.

The protein is Elongation factor P-like protein of Xanthomonas oryzae pv. oryzae (strain MAFF 311018).